A 72-amino-acid chain; its full sequence is Large ribosomal subunit protein bL31c (72 aa).

Belongs to the bacterial ribosomal protein bL31 family. Type A subfamily. In terms of assembly, part of the 50S ribosomal subunit.

Its subcellular location is the plastid. The protein localises to the chloroplast. Functionally, binds the 23S rRNA. This Trieres chinensis (Marine centric diatom) protein is Large ribosomal subunit protein bL31c.